Consider the following 366-residue polypeptide: Chorismate synthase (366 aa).

NADP(+) contacts are provided by R48 and R54. Residues 125–127 (RSS), 238–239 (NA), G278, 293–297 (KPTSS), and R319 contribute to the FMN site.

Belongs to the chorismate synthase family. In terms of assembly, homotetramer. FMNH2 serves as cofactor.

The enzyme catalyses 5-O-(1-carboxyvinyl)-3-phosphoshikimate = chorismate + phosphate. It participates in metabolic intermediate biosynthesis; chorismate biosynthesis; chorismate from D-erythrose 4-phosphate and phosphoenolpyruvate: step 7/7. Catalyzes the anti-1,4-elimination of the C-3 phosphate and the C-6 proR hydrogen from 5-enolpyruvylshikimate-3-phosphate (EPSP) to yield chorismate, which is the branch point compound that serves as the starting substrate for the three terminal pathways of aromatic amino acid biosynthesis. This reaction introduces a second double bond into the aromatic ring system. This is Chorismate synthase from Ralstonia pickettii (strain 12J).